The chain runs to 374 residues: N5-carboxyaminoimidazole ribonucleotide synthase (374 aa).

ATP-binding positions include arginine 108, lysine 148, 153–159 (GYDGKGQ), 183–186 (EQFL), glutamate 191, histidine 214, and 266–267 (NE). The ATP-grasp domain occupies 112 to 296 (KQTLQKAGSK…QFDTHILAVT (185 aa)).

The protein belongs to the PurK/PurT family. Homodimer.

It catalyses the reaction 5-amino-1-(5-phospho-beta-D-ribosyl)imidazole + hydrogencarbonate + ATP = 5-carboxyamino-1-(5-phospho-D-ribosyl)imidazole + ADP + phosphate + 2 H(+). It functions in the pathway purine metabolism; IMP biosynthesis via de novo pathway; 5-amino-1-(5-phospho-D-ribosyl)imidazole-4-carboxylate from 5-amino-1-(5-phospho-D-ribosyl)imidazole (N5-CAIR route): step 1/2. Functionally, catalyzes the ATP-dependent conversion of 5-aminoimidazole ribonucleotide (AIR) and HCO(3)(-) to N5-carboxyaminoimidazole ribonucleotide (N5-CAIR). The sequence is that of N5-carboxyaminoimidazole ribonucleotide synthase from Staphylococcus haemolyticus (strain JCSC1435).